Reading from the N-terminus, the 864-residue chain is Calphotin (864 aa).

Residues Leu-816–Leu-858 are leucine-zipper.

Homodimer. Soma and axons of photoreceptor cells of compound eyes and ocelli.

It is found in the cytoplasm. Plays important roles in both rhabdomere development and in photoreceptor cell survival. Might function as a calcium-sequestering 'sponge' to regulate the amount of free cytoplasmic calcium. It binds 0.3 mole of Ca(2+) per mole of protein. This is Calphotin (Cpn) from Drosophila melanogaster (Fruit fly).